We begin with the raw amino-acid sequence, 38 residues long: Photosystem II reaction center protein L (38 aa).

A helical transmembrane segment spans residues Ser-17 to Phe-37.

The protein belongs to the PsbL family. PSII is composed of 1 copy each of membrane proteins PsbA, PsbB, PsbC, PsbD, PsbE, PsbF, PsbH, PsbI, PsbJ, PsbK, PsbL, PsbM, PsbT, PsbX, PsbY, PsbZ, Psb30/Ycf12, peripheral proteins PsbO, CyanoQ (PsbQ), PsbU, PsbV and a large number of cofactors. It forms dimeric complexes.

The protein resides in the cellular thylakoid membrane. Functionally, one of the components of the core complex of photosystem II (PSII). PSII is a light-driven water:plastoquinone oxidoreductase that uses light energy to abstract electrons from H(2)O, generating O(2) and a proton gradient subsequently used for ATP formation. It consists of a core antenna complex that captures photons, and an electron transfer chain that converts photonic excitation into a charge separation. This subunit is found at the monomer-monomer interface and is required for correct PSII assembly and/or dimerization. The protein is Photosystem II reaction center protein L of Acaryochloris marina (strain MBIC 11017).